A 218-amino-acid chain; its full sequence is Small ribosomal subunit protein uS3c (218 aa).

In terms of domain architecture, KH type-2 spans 47-117; it reads VRTHIRNSSN…KLKITLSEID (71 aa).

The protein belongs to the universal ribosomal protein uS3 family. As to quaternary structure, part of the 30S ribosomal subunit.

The protein localises to the plastid. The protein resides in the chloroplast. In Spirogyra maxima (Green alga), this protein is Small ribosomal subunit protein uS3c (rps3).